Here is a 340-residue protein sequence, read N- to C-terminus: 4-hydroxy-3-methylbut-2-enyl diphosphate reductase (340 aa).

Residue C13 coordinates [4Fe-4S] cluster. H42 and H75 together coordinate (2E)-4-hydroxy-3-methylbut-2-enyl diphosphate. H42 and H75 together coordinate dimethylallyl diphosphate. Isopentenyl diphosphate is bound by residues H42 and H75. C97 is a binding site for [4Fe-4S] cluster. H125 provides a ligand contact to (2E)-4-hydroxy-3-methylbut-2-enyl diphosphate. Residue H125 participates in dimethylallyl diphosphate binding. Isopentenyl diphosphate is bound at residue H125. Residue E127 is the Proton donor of the active site. T165 serves as a coordination point for (2E)-4-hydroxy-3-methylbut-2-enyl diphosphate. C195 serves as a coordination point for [4Fe-4S] cluster. (2E)-4-hydroxy-3-methylbut-2-enyl diphosphate contacts are provided by S223, S224, N225, and S267. Dimethylallyl diphosphate contacts are provided by S223, S224, N225, and S267. Residues S223, S224, N225, and S267 each contribute to the isopentenyl diphosphate site. A disordered region spans residues 317 to 340; that stretch reads NNLDNKTAASEEADSLSNDTEQEA. Positions 331–340 are enriched in polar residues; it reads SLSNDTEQEA.

The protein belongs to the IspH family. Requires [4Fe-4S] cluster as cofactor.

The enzyme catalyses isopentenyl diphosphate + 2 oxidized [2Fe-2S]-[ferredoxin] + H2O = (2E)-4-hydroxy-3-methylbut-2-enyl diphosphate + 2 reduced [2Fe-2S]-[ferredoxin] + 2 H(+). The catalysed reaction is dimethylallyl diphosphate + 2 oxidized [2Fe-2S]-[ferredoxin] + H2O = (2E)-4-hydroxy-3-methylbut-2-enyl diphosphate + 2 reduced [2Fe-2S]-[ferredoxin] + 2 H(+). It participates in isoprenoid biosynthesis; dimethylallyl diphosphate biosynthesis; dimethylallyl diphosphate from (2E)-4-hydroxy-3-methylbutenyl diphosphate: step 1/1. It functions in the pathway isoprenoid biosynthesis; isopentenyl diphosphate biosynthesis via DXP pathway; isopentenyl diphosphate from 1-deoxy-D-xylulose 5-phosphate: step 6/6. Functionally, catalyzes the conversion of 1-hydroxy-2-methyl-2-(E)-butenyl 4-diphosphate (HMBPP) into a mixture of isopentenyl diphosphate (IPP) and dimethylallyl diphosphate (DMAPP). Acts in the terminal step of the DOXP/MEP pathway for isoprenoid precursor biosynthesis. The polypeptide is 4-hydroxy-3-methylbut-2-enyl diphosphate reductase (Zymomonas mobilis subsp. mobilis (strain ATCC 31821 / ZM4 / CP4)).